Here is a 311-residue protein sequence, read N- to C-terminus: 2-phospho-L-lactate transferase (311 aa).

Residues aspartate 52 and arginine 91 each coordinate 7,8-didemethyl-8-hydroxy-5-deazariboflavin.

Belongs to the CofD family. As to quaternary structure, homodimer. Requires Mg(2+) as cofactor.

It carries out the reaction (2S)-lactyl-2-diphospho-5'-guanosine + 7,8-didemethyl-8-hydroxy-5-deazariboflavin = oxidized coenzyme F420-0 + GMP + H(+). It functions in the pathway cofactor biosynthesis; coenzyme F420 biosynthesis. Inhibited by EDTA in vitro. Catalyzes the transfer of the 2-phospholactate moiety from (2S)-lactyl-2-diphospho-5'-guanosine to 7,8-didemethyl-8-hydroxy-5-deazariboflavin (FO) with the formation of oxidized coenzyme F420-0 and GMP. In Methanocaldococcus jannaschii (strain ATCC 43067 / DSM 2661 / JAL-1 / JCM 10045 / NBRC 100440) (Methanococcus jannaschii), this protein is 2-phospho-L-lactate transferase.